Consider the following 319-residue polypeptide: Acetyl esterase (319 aa).

An Involved in the stabilization of the negatively charged intermediate by the formation of the oxyanion hole motif is present at residues 91–93 (HGG). Residues Ser165, Asp262, and His292 contribute to the active site.

Belongs to the 'GDXG' lipolytic enzyme family. As to quaternary structure, homodimer. Interacts with MalT and MelA.

The protein resides in the cytoplasm. Functionally, displays esterase activity towards short chain fatty esters (acyl chain length of up to 8 carbons). Able to hydrolyze triacetylglycerol (triacetin) and tributyrylglycerol (tributyrin), but not trioleylglycerol (triolein) or cholesterol oleate. Negatively regulates MalT activity by antagonizing maltotriose binding. Inhibits MelA galactosidase activity. The sequence is that of Acetyl esterase from Shigella boydii serotype 4 (strain Sb227).